Here is a 471-residue protein sequence, read N- to C-terminus: Glutamate--tRNA ligase (471 aa).

The 'HIGH' region motif lies at 9 to 19 (PSPTGYLHVGG). Residues Cys-98, Cys-100, Cys-125, and His-127 each coordinate Zn(2+). A 'KMSKS' region motif is present at residues 237–241 (KLSKR). Lys-240 lines the ATP pocket.

This sequence belongs to the class-I aminoacyl-tRNA synthetase family. Glutamate--tRNA ligase type 1 subfamily. In terms of assembly, monomer. Zn(2+) serves as cofactor.

It is found in the cytoplasm. The catalysed reaction is tRNA(Glu) + L-glutamate + ATP = L-glutamyl-tRNA(Glu) + AMP + diphosphate. Its function is as follows. Catalyzes the attachment of glutamate to tRNA(Glu) in a two-step reaction: glutamate is first activated by ATP to form Glu-AMP and then transferred to the acceptor end of tRNA(Glu). This is Glutamate--tRNA ligase from Citrobacter koseri (strain ATCC BAA-895 / CDC 4225-83 / SGSC4696).